The chain runs to 162 residues: MVKLDRAARGLFLAELVRGLSLTFSYMFRPRATINYPYERSPMSPRFRGEHALRRYPNGEERCIACKLCEAVCPALAITIEAEPREDGSRRTTRYDIDMTKCIYCGLCQEACPVDAIVEGPNLEFAAETREELFYNKEKLLANGDRWEALIAANIAADAPYR.

4Fe-4S ferredoxin-type domains follow at residues 53 to 83 (LRRYPNGEERCIACKLCEAVCPALAITIEAE) and 93 to 122 (TRYDIDMTKCIYCGLCQEACPVDAIVEGPN). 8 residues coordinate [4Fe-4S] cluster: C63, C66, C69, C73, C102, C105, C108, and C112.

The protein belongs to the complex I 23 kDa subunit family. NDH-1 is composed of 14 different subunits. Subunits NuoA, H, J, K, L, M, N constitute the membrane sector of the complex. [4Fe-4S] cluster is required as a cofactor.

The protein localises to the cell inner membrane. It catalyses the reaction a quinone + NADH + 5 H(+)(in) = a quinol + NAD(+) + 4 H(+)(out). NDH-1 shuttles electrons from NADH, via FMN and iron-sulfur (Fe-S) centers, to quinones in the respiratory chain. The immediate electron acceptor for the enzyme in this species is believed to be ubiquinone. Couples the redox reaction to proton translocation (for every two electrons transferred, four hydrogen ions are translocated across the cytoplasmic membrane), and thus conserves the redox energy in a proton gradient. The sequence is that of NADH-quinone oxidoreductase subunit I from Rhodospirillum centenum (strain ATCC 51521 / SW).